Here is a 371-residue protein sequence, read N- to C-terminus: Hsc70-interacting protein (371 aa).

A disordered region spans residues 38–80 (MGGKVPPATHKAKSEENTKEEKRDKTTEENIKTEELSSEESDL). A compositionally biased stretch (basic and acidic residues) spans 49–72 (AKSEENTKEEKRDKTTEENIKTEE). TPR repeat units lie at residues 113-146 (ANEKKGAAIEALNDGELQKAIDLFTDAIKLNPRL), 147-180 (AILYAKRASVFVKLQKPNAAIRDCDRAIEINPDS), and 181-214 (AQPYKWRGKAHRLLGHWEEAAHDLALACKLDYDE). Basic and acidic residues predominate over residues 255-271 (KAREEHERAQREEEARR). Residues 255 to 296 (KAREEHERAQREEEARRQSGSQYGSFPGGFPGGMPGNFPGGM) form a disordered region. The span at 280-296 (FPGGFPGGMPGNFPGGM) shows a compositional bias: gly residues. The region spanning 321–360 (DPEVLAAMQDPEVMVAFQDVAQNPSNMSKYQSNPKVMNLI) is the STI1 domain. Residue Ser-348 is modified to Phosphoserine; by GRK5. Residues Lys-355 and Lys-362 each carry the N6-acetyllysine modification.

Belongs to the FAM10 family. Homotetramer. Interacts with HSC70 as well as DNAJ homologs and HSP90. Interacts (via the C-terminus 302- 318 AA) with GRK5.

It is found in the cytoplasm. In terms of biological role, one HIP oligomer binds the ATPase domains of at least two HSC70 molecules dependent on activation of the HSC70 ATPase by HSP40. Stabilizes the ADP state of HSC70 that has a high affinity for substrate protein. Through its own chaperone activity, it may contribute to the interaction of HSC70 with various target proteins. This is Hsc70-interacting protein (St13) from Mus musculus (Mouse).